We begin with the raw amino-acid sequence, 1052 residues long: Malignant fibrous histiocytoma-amplified sequence 1 (1052 aa).

Residue alanine 2 is modified to N-acetylalanine. 13 LRR repeats span residues 64 to 85, 88 to 109, 112 to 133, 136 to 157, 159 to 180, 182 to 203, 205 to 226, 228 to 249, 251 to 272, 274 to 296, 297 to 318, 320 to 341, and 343 to 364; these read DIEA…LGSA, SLRV…VAEL, HLTE…VVSA, ELRK…LGAL, HLEE…LSCL, RLRT…LLQL, ALEE…ISAL, ALKI…FCEL, SLES…FSCL, RLKM…LPLA, GLEE…ISGL, RLLT…IVEL, and GLEE…FGQL. Residues 64 to 364 are required for interaction with PJA2; it reads DIEALNLGNN…AVLPDHFGQL (301 aa). Positions 64 to 649 are required for interaction with PPP2R2A; that stretch reads DIEALNLGNN…DKLLSVAEHR (586 aa). Residues 403-649 form the Roc domain; it reads QPAVQPRLKL…DKLLSVAEHR (247 aa). Lysine 601 carries the post-translational modification N6-acetyllysine.

In terms of assembly, interacts with RAF1. Interacts with HSPD1. Interacts with PPP2CA; retains PPP2CA into the cytoplasm and excludes it from the nucleus. Interacts with PPP2R2A; the interaction is direct. Interacts with PJA2. In terms of processing, ubiquitinated. Ubiquitination by PJA2 does not lead MFHAS1 to proteasomal degradation but positively regulates its function in polarization of macrophages. Ubiquitously expressed. Overexpressed in malignant fibrous histiocytomas. Expressed in red blood cells (at protein level).

It is found in the cytoplasm. Probable GTP-binding protein. Functions in innate immunity and more specifically the inflammatory response as a regulator of the Toll-like receptor TLR2 and TLR4 signaling pathways. Negatively regulates the part of the TLR4 signaling pathway that leads to the activation of the transcription factor AP-1. By retaining the phosphatase complex PP2A into the cytoplasm, prevents the dephosphorylation of the AP-1 subunit JUN which is required for proper activation of the transcription factor. Both inhibits and activates the TLR2-dependent signaling pathway. Positively regulates the TLR2 signaling pathway to activate specifically the downstream p38 and JNK MAP kinases and promote the polarization of macrophages toward the pro-inflammatory M1 phenotype. It may also play a role in the regulation of inflammation induced by high glucose through the PKB/AKT signaling pathway. Also involved in erythrocyte differentiation through activation of the ERK1/ERK2 signaling pathway. This Homo sapiens (Human) protein is Malignant fibrous histiocytoma-amplified sequence 1.